A 330-amino-acid chain; its full sequence is Peptide transport system ATP-binding protein SapD (330 aa).

The ABC transporter domain maps to 6 to 259; that stretch reads IRNLTIEFKT…PHHPYTQALI (254 aa). Residue 40-47 coordinates ATP; sequence GESGSGKS.

This sequence belongs to the ABC transporter superfamily.

Its subcellular location is the cell inner membrane. Its function is as follows. Involved in a peptide intake transport system that plays a role in the resistance to antimicrobial peptides. The sequence is that of Peptide transport system ATP-binding protein SapD from Salmonella typhimurium (strain LT2 / SGSC1412 / ATCC 700720).